A 620-amino-acid chain; its full sequence is 1-deoxy-D-xylulose-5-phosphate synthase (620 aa).

Residues H80 and 121–123 (GHS) each bind thiamine diphosphate. Residue D152 coordinates Mg(2+). Thiamine diphosphate is bound by residues 153–154 (GA), N181, Y288, and E370. N181 provides a ligand contact to Mg(2+).

The protein belongs to the transketolase family. DXPS subfamily. Homodimer. It depends on Mg(2+) as a cofactor. Thiamine diphosphate is required as a cofactor.

The enzyme catalyses D-glyceraldehyde 3-phosphate + pyruvate + H(+) = 1-deoxy-D-xylulose 5-phosphate + CO2. It participates in metabolic intermediate biosynthesis; 1-deoxy-D-xylulose 5-phosphate biosynthesis; 1-deoxy-D-xylulose 5-phosphate from D-glyceraldehyde 3-phosphate and pyruvate: step 1/1. Catalyzes the acyloin condensation reaction between C atoms 2 and 3 of pyruvate and glyceraldehyde 3-phosphate to yield 1-deoxy-D-xylulose-5-phosphate (DXP). The protein is 1-deoxy-D-xylulose-5-phosphate synthase of Escherichia coli O6:K15:H31 (strain 536 / UPEC).